Here is a 543-residue protein sequence, read N- to C-terminus: CTP synthase (543 aa).

Residues 1-265 (MARYIFITGG…DDEVLAAFGI (265 aa)) are amidoligase domain. Position 13 (S13) interacts with CTP. Residue S13 coordinates UTP. 14–19 (SLGKGL) provides a ligand contact to ATP. Y54 provides a ligand contact to L-glutamine. D71 lines the ATP pocket. Mg(2+) contacts are provided by D71 and E139. CTP is bound by residues 146–148 (DIE), 186–191 (KTKPTQ), and K222. Residues 186-191 (KTKPTQ) and K222 contribute to the UTP site. 238–240 (RDV) is an ATP binding site. A Glutamine amidotransferase type-1 domain is found at 291–542 (TIAIVGKYTG…IQAAMVQSRL (252 aa)). G353 contacts L-glutamine. Catalysis depends on C380, which acts as the Nucleophile; for glutamine hydrolysis. L-glutamine is bound by residues 381–384 (FGMQ), E404, and R470. Residues H515 and E517 contribute to the active site.

Belongs to the CTP synthase family. In terms of assembly, homotetramer.

The catalysed reaction is UTP + L-glutamine + ATP + H2O = CTP + L-glutamate + ADP + phosphate + 2 H(+). It catalyses the reaction L-glutamine + H2O = L-glutamate + NH4(+). The enzyme catalyses UTP + NH4(+) + ATP = CTP + ADP + phosphate + 2 H(+). It participates in pyrimidine metabolism; CTP biosynthesis via de novo pathway; CTP from UDP: step 2/2. Allosterically activated by GTP, when glutamine is the substrate; GTP has no effect on the reaction when ammonia is the substrate. The allosteric effector GTP functions by stabilizing the protein conformation that binds the tetrahedral intermediate(s) formed during glutamine hydrolysis. Inhibited by the product CTP, via allosteric rather than competitive inhibition. Catalyzes the ATP-dependent amination of UTP to CTP with either L-glutamine or ammonia as the source of nitrogen. Regulates intracellular CTP levels through interactions with the four ribonucleotide triphosphates. In Bradyrhizobium diazoefficiens (strain JCM 10833 / BCRC 13528 / IAM 13628 / NBRC 14792 / USDA 110), this protein is CTP synthase.